The following is a 56-amino-acid chain: Small ribosomal subunit protein uS14 (56 aa).

Zn(2+)-binding residues include cysteine 21, cysteine 24, cysteine 39, and cysteine 42.

The protein belongs to the universal ribosomal protein uS14 family. In terms of assembly, component of the 40S small ribosomal subunit. Zn(2+) is required as a cofactor.

Its subcellular location is the cytoplasm. It localises to the cytosol. It is found in the rough endoplasmic reticulum. The protein is Small ribosomal subunit protein uS14 (RpS29) of Ixodes scapularis (Black-legged tick).